Consider the following 455-residue polypeptide: E3 ubiquitin-protein ligase IPI1 (455 aa).

The segment at 1–42 is disordered; it reads MGAEEEEEPASAVGREGGGGGGGARAAGAGAGGDTADDDDSG. Gly residues predominate over residues 15–33; sequence REGGGGGGGARAAGAGAGG. Residues 51–97 form an RING-type; atypical zinc finger; sequence CSICLDAVVAGGGDRSTARLQCGHEFHLDCIGSAFNAKGVMQCPNCR. Disordered stretches follow at residues 286–311 and 426–455; these read LDSD…SRIP and QWIG…IPRM. A compositionally biased stretch (pro residues) spans 433–442; it reads SPPPPPPPPA.

In terms of assembly, interacts with SPL14/IPA1.

Its subcellular location is the nucleus. It carries out the reaction S-ubiquitinyl-[E2 ubiquitin-conjugating enzyme]-L-cysteine + [acceptor protein]-L-lysine = [E2 ubiquitin-conjugating enzyme]-L-cysteine + N(6)-ubiquitinyl-[acceptor protein]-L-lysine.. It functions in the pathway protein modification; protein ubiquitination. In terms of biological role, functions as an E3 ligase that promotes polyubiquitination of SPL14/IPA1 for subsequent proteasomal degradation. Regulates plant architecture by modulating SPL14/IPA1 abundance. Promotes the degradation of SPL14/IPA1 in panicles, while it stabilizes SPL14/IPA1 in shoot apices. Ubiquitinates the SPL14/IPA1-mediated complex with 'Lys-48'-linked polyubiquitin in panicles and 'Lys-63'-linked polyubiquitin chains in the shoot apex. The chain is E3 ubiquitin-protein ligase IPI1 from Oryza sativa subsp. japonica (Rice).